The primary structure comprises 85 residues: Small ribosomal subunit protein bS20 (85 aa).

The protein belongs to the bacterial ribosomal protein bS20 family.

Functionally, binds directly to 16S ribosomal RNA. The protein is Small ribosomal subunit protein bS20 of Lactobacillus johnsonii (strain CNCM I-12250 / La1 / NCC 533).